The chain runs to 299 residues: Anti-sigma-D factor RsdA (299 aa).

Residues 86–106 (LAAVGSVAAALLVLSGFGAVV) form a helical membrane-spanning segment. The segment at 187–299 (NTKVETRDPN…APETPVSPTH (113 aa)) is disordered. Composition is skewed to low complexity over residues 201–212 (PGSPSNPAAPGS) and 250–271 (PNSTSTVAASPSTPSSKPEPGS).

Interacts with ECF RNA polymerase sigma factor SigD; this should inhibit the interaction of SigD with the RNA polymerase catalytic core. Post-translationally, the cytosolic fragment is degraded by a ClpP1-ClpP2-ClpX complex, as would be expected after S1P and S2P intramembrane proteolysis. This releases SigD so that it may bind to the RNA polymerase catalytic core.

Its subcellular location is the cell membrane. Functionally, an anti-sigma factor for extracytoplasmic function (ECF) sigma factor SigD. ECF sigma factors are held in an inactive form by an anti-sigma factor until released by regulated intramembrane proteolysis (RIP). RIP occurs when an extracytoplasmic signal triggers a concerted proteolytic cascade to transmit information and elicit cellular responses. The membrane-spanning regulatory substrate protein is first cut extracytoplasmically (site-1 protease, S1P), then within the membrane itself (site-2 protease, S2P), while cytoplasmic proteases finish degrading the regulatory protein, liberating the sigma factor. Neither S1P nor S2P proteases have been so far identified for this anti-sigma factor. This Mycobacterium bovis (strain ATCC BAA-935 / AF2122/97) protein is Anti-sigma-D factor RsdA (rsda).